Here is a 103-residue protein sequence, read N- to C-terminus: Small ribosomal subunit protein uS10 (103 aa).

This sequence belongs to the universal ribosomal protein uS10 family. Part of the 30S ribosomal subunit.

Functionally, involved in the binding of tRNA to the ribosomes. This is Small ribosomal subunit protein uS10 from Clostridioides difficile (strain 630) (Peptoclostridium difficile).